A 211-amino-acid polypeptide reads, in one-letter code: Dual specificity protein phosphatase 26 (211 aa).

Residues 60-207 (NHADEVWPGL…LLALDRRLRQ (148 aa)) form the Tyrosine-protein phosphatase domain. Cysteine 152 acts as the Phosphocysteine intermediate in catalysis.

Belongs to the protein-tyrosine phosphatase family. Non-receptor class dual specificity subfamily. Interacts with HSF4. Brain and skeletal muscle. In the brain it is expressed ubiquitously except in the hippocampus.

Its subcellular location is the cytoplasm. The protein localises to the nucleus. The protein resides in the golgi apparatus. The catalysed reaction is O-phospho-L-tyrosyl-[protein] + H2O = L-tyrosyl-[protein] + phosphate. The enzyme catalyses O-phospho-L-seryl-[protein] + H2O = L-seryl-[protein] + phosphate. It catalyses the reaction O-phospho-L-threonyl-[protein] + H2O = L-threonyl-[protein] + phosphate. In terms of biological role, inactivates MAPK1 and MAPK3 which leads to dephosphorylation of heat shock factor protein 4 and a reduction in its DNA-binding activity. The protein is Dual specificity protein phosphatase 26 (Dusp26) of Mus musculus (Mouse).